The sequence spans 779 residues: Membrane metallo-endopeptidase-like 1 (779 aa).

Residues 1 to 27 (MGKSEGPVGMVESAGRAGQKRPGFLEG) are Cytoplasmic-facing. A helical; Signal-anchor for type II membrane protein transmembrane segment spans residues 28-48 (GLLLLLLLVTAALVALGVLYA). Residues 49 to 779 (DRRGKQLPRL…MHPKERCRVW (731 aa)) are Lumenal-facing. In terms of domain architecture, Peptidase M13 spans 88-779 (VCTTPGCVIA…MHPKERCRVW (692 aa)). 5 cysteine pairs are disulfide-bonded: cysteine 89–cysteine 94, cysteine 112–cysteine 764, cysteine 120–cysteine 724, cysteine 175–cysteine 439, and cysteine 650–cysteine 776. Arginine 135 provides a ligand contact to a peptide. N-linked (GlcNAc...) asparagine glycosylation is found at asparagine 177, asparagine 207, asparagine 350, and asparagine 530. A coiled-coil region spans residues 515-560 (LEEMNRRLDEEYSNLNFSEDLYFENSLQNLKVGAQRSLRKLREKVD). Histidine 613 contacts Zn(2+). Glutamate 614 is a catalytic residue. Histidine 617 provides a ligand contact to Zn(2+). Asparagine 657 is a glycosylation site (N-linked (GlcNAc...) asparagine). Glutamate 676 contributes to the Zn(2+) binding site. Aspartate 680 acts as the Proton donor in catalysis.

This sequence belongs to the peptidase M13 family. Zn(2+) is required as a cofactor. N-glycosylated. Predominantly expressed in testis. Weakly expressed in brain, kidney and heart.

Its subcellular location is the membrane. The protein resides in the secreted. The catalysed reaction is Preferential cleavage of polypeptides between hydrophobic residues, particularly with Phe or Tyr at P1'.. Inhibited by thiorphan and phosphoramidon. In terms of biological role, metalloprotease involved in sperm function, possibly by modulating the processes of fertilization and early embryonic development. Degrades a broad variety of small peptides with a preference for peptides shorter than 3 kDa containing neutral bulky aliphatic or aromatic amino acid residues. Shares the same substrate specificity with MME and cleaves peptides at the same amide bond. In Homo sapiens (Human), this protein is Membrane metallo-endopeptidase-like 1 (MMEL1).